The following is a 38-amino-acid chain: CHH precursor-related peptide (38 aa).

The tract at residues 18-38 (GALEPSTPLGDLSGSLGHPVE) is disordered.

As to expression, produced by the medulla terminalis X-organ in the eyestalks and transported to the sinus gland where it is stored and released.

The protein localises to the secreted. The protein is CHH precursor-related peptide of Cancer pagurus (Rock crab).